A 347-amino-acid polypeptide reads, in one-letter code: L-threonine 3-dehydrogenase (347 aa).

Cys-43 contributes to the Zn(2+) binding site. Catalysis depends on charge relay system residues Thr-45 and His-48. 6 residues coordinate Zn(2+): His-68, Glu-69, Cys-98, Cys-101, Cys-104, and Cys-112. NAD(+) contacts are provided by residues Ile-180, Asp-200, Arg-205, 267–269 (LSL), and 292–293 (IT).

This sequence belongs to the zinc-containing alcohol dehydrogenase family. In terms of assembly, homotetramer. It depends on Zn(2+) as a cofactor.

Its subcellular location is the cytoplasm. The catalysed reaction is L-threonine + NAD(+) = (2S)-2-amino-3-oxobutanoate + NADH + H(+). It functions in the pathway amino-acid degradation; L-threonine degradation via oxydo-reductase pathway; glycine from L-threonine: step 1/2. Functionally, catalyzes the NAD(+)-dependent oxidation of L-threonine to 2-amino-3-ketobutyrate. The chain is L-threonine 3-dehydrogenase from Bacillus subtilis (strain 168).